Here is a 127-residue protein sequence, read N- to C-terminus: Small ribosomal subunit protein eS8 (127 aa).

Residues 1-33 are disordered; it reads MAIWQGKSMKKPSGGRAKMNRGKRKYELGREPA.

It belongs to the eukaryotic ribosomal protein eS8 family. Part of the 30S ribosomal subunit.

The protein is Small ribosomal subunit protein eS8 (rps8e) of Methanothermobacter thermautotrophicus (strain ATCC 29096 / DSM 1053 / JCM 10044 / NBRC 100330 / Delta H) (Methanobacterium thermoautotrophicum).